A 602-amino-acid polypeptide reads, in one-letter code: Aspartate--tRNA(Asp/Asn) ligase (602 aa).

E175 contacts L-aspartate. The tract at residues 199–202 (QIFK) is aspartate. R221 is an L-aspartate binding site. ATP is bound by residues 221–223 (RDE) and Q230. H458 provides a ligand contact to L-aspartate. ATP is bound at residue E492. R499 provides a ligand contact to L-aspartate. 544–547 (GLDR) lines the ATP pocket.

It belongs to the class-II aminoacyl-tRNA synthetase family. Type 1 subfamily. Homodimer.

Its subcellular location is the cytoplasm. It carries out the reaction tRNA(Asx) + L-aspartate + ATP = L-aspartyl-tRNA(Asx) + AMP + diphosphate. Aspartyl-tRNA synthetase with relaxed tRNA specificity since it is able to aspartylate not only its cognate tRNA(Asp) but also tRNA(Asn). Reaction proceeds in two steps: L-aspartate is first activated by ATP to form Asp-AMP and then transferred to the acceptor end of tRNA(Asp/Asn). In Cupriavidus pinatubonensis (strain JMP 134 / LMG 1197) (Cupriavidus necator (strain JMP 134)), this protein is Aspartate--tRNA(Asp/Asn) ligase.